A 670-amino-acid polypeptide reads, in one-letter code: Protein-glutamine gamma-glutamyltransferase 4 (670 aa).

Asn-151 and Asn-219 each carry an N-linked (GlcNAc...) asparagine glycan. Residue Cys-255 is part of the active site. Asn-288 carries N-linked (GlcNAc...) asparagine glycosylation. Active-site residues include His-314 and Asp-337. Ca(2+) is bound by residues Asn-377, Asp-379, Glu-429, and Glu-434. Residues Asn-456 and Asn-491 are each glycosylated (N-linked (GlcNAc...) asparagine).

Belongs to the transglutaminase superfamily. Transglutaminase family. As to quaternary structure, homodimer. Requires Ca(2+) as cofactor. As to expression, expressed in the coagulating gland and in the dorsal part of the prostate. Not expressed in the brain, heart, kidney, liver, lung, muscle, pancreas, spleen, stomach, testis and thymus.

Its subcellular location is the secreted. It carries out the reaction L-glutaminyl-[protein] + L-lysyl-[protein] = [protein]-L-lysyl-N(6)-5-L-glutamyl-[protein] + NH4(+). In terms of biological role, associated with the mammalian reproductive process. Plays an important role in the formation of the seminal coagulum through the cross-linking of specific proteins present in the seminal plasma. Transglutaminase is also required to stabilize the copulatory plug. The polypeptide is Protein-glutamine gamma-glutamyltransferase 4 (Mus musculus (Mouse)).